Reading from the N-terminus, the 599-residue chain is Putative clathrin assembly protein At1g03050 (599 aa).

One can recognise an ENTH domain in the interval 26 to 162 (GRSASLSELD…DFRMQARHGK (137 aa)). Disordered stretches follow at residues 332–382 (KQSK…PEEE) and 580–599 (QGHM…TPQY). Acidic residues-rich tracts occupy residues 341–359 (ADED…EQED) and 373–382 (EEDDVKPEEE). The segment covering 585–599 (LRQNQNQPYSYTPQY) has biased composition (polar residues).

It localises to the membrane. The protein localises to the clathrin-coated pit. It is found in the golgi apparatus. The protein resides in the cytoplasmic vesicle. Its subcellular location is the clathrin-coated vesicle. The polypeptide is Putative clathrin assembly protein At1g03050 (Arabidopsis thaliana (Mouse-ear cress)).